A 146-amino-acid polypeptide reads, in one-letter code: Oxygen-independent coproporphyrinogen III oxidase (146 aa).

Residue Y54 coordinates S-adenosyl-L-methionine. [4Fe-4S] cluster-binding residues include C60 and C64. Residue F66 participates in S-adenosyl-L-methionine binding. Position 67 (C67) interacts with [4Fe-4S] cluster. Residues 111–112 and E143 contribute to the S-adenosyl-L-methionine site; that span reads GT.

This sequence belongs to the anaerobic coproporphyrinogen-III oxidase family. Monomer. The cofactor is [4Fe-4S] cluster.

It localises to the cytoplasm. It catalyses the reaction coproporphyrinogen III + 2 S-adenosyl-L-methionine = protoporphyrinogen IX + 2 5'-deoxyadenosine + 2 L-methionine + 2 CO2. It participates in porphyrin-containing compound metabolism; protoporphyrin-IX biosynthesis; protoporphyrinogen-IX from coproporphyrinogen-III (AdoMet route): step 1/1. Involved in the heme biosynthesis. Catalyzes the anaerobic oxidative decarboxylation of propionate groups of rings A and B of coproporphyrinogen III to yield the vinyl groups in protoporphyrinogen IX. In Mannheimia haemolytica (Pasteurella haemolytica), this protein is Oxygen-independent coproporphyrinogen III oxidase (hemN).